The sequence spans 223 residues: Rho-related protein racE (223 aa).

Gly-18–Thr-25 contributes to the GTP binding site. An Effector region motif is present at residues Tyr-40 to Tyr-48. GTP contacts are provided by residues Asp-65–Gln-69 and Thr-123–Asp-126. Positions Gly-187 to Leu-223 are disordered. The segment covering Lys-210–Leu-223 has biased composition (basic residues). Position 220 is a cysteine methyl ester (Cys-220). Cys-220 is lipidated: S-geranylgeranyl cysteine. Residues Ile-221 to Leu-223 constitute a propeptide, removed in mature form.

It belongs to the small GTPase superfamily. Rho family. Interacts with rgaA.

Its subcellular location is the cell membrane. In terms of biological role, specifically required for cytokinesis. The sequence is that of Rho-related protein racE (racE) from Dictyostelium discoideum (Social amoeba).